Consider the following 166-residue polypeptide: Large ribosomal subunit protein uL10 (166 aa).

This sequence belongs to the universal ribosomal protein uL10 family. In terms of assembly, part of the ribosomal stalk of the 50S ribosomal subunit. The N-terminus interacts with L11 and the large rRNA to form the base of the stalk. The C-terminus forms an elongated spine to which L12 dimers bind in a sequential fashion forming a multimeric L10(L12)X complex.

Functionally, forms part of the ribosomal stalk, playing a central role in the interaction of the ribosome with GTP-bound translation factors. The sequence is that of Large ribosomal subunit protein uL10 from Bacillus cereus (strain 03BB102).